The sequence spans 360 residues: 4-hydroxy-3-methylbut-2-en-1-yl diphosphate synthase (flavodoxin) (360 aa).

Residues cysteine 265, cysteine 268, cysteine 300, and glutamate 307 each coordinate [4Fe-4S] cluster.

The protein belongs to the IspG family. Requires [4Fe-4S] cluster as cofactor.

It catalyses the reaction (2E)-4-hydroxy-3-methylbut-2-enyl diphosphate + oxidized [flavodoxin] + H2O + 2 H(+) = 2-C-methyl-D-erythritol 2,4-cyclic diphosphate + reduced [flavodoxin]. It participates in isoprenoid biosynthesis; isopentenyl diphosphate biosynthesis via DXP pathway; isopentenyl diphosphate from 1-deoxy-D-xylulose 5-phosphate: step 5/6. Its function is as follows. Converts 2C-methyl-D-erythritol 2,4-cyclodiphosphate (ME-2,4cPP) into 1-hydroxy-2-methyl-2-(E)-butenyl 4-diphosphate. The chain is 4-hydroxy-3-methylbut-2-en-1-yl diphosphate synthase (flavodoxin) from Brevibacillus brevis (strain 47 / JCM 6285 / NBRC 100599).